A 200-amino-acid polypeptide reads, in one-letter code: NADH-quinone oxidoreductase subunit I (200 aa).

2 consecutive 4Fe-4S ferredoxin-type domains span residues 73-102 (RLLESGNERCIGCGLCEKICVSNCIRMETT) and 112-141 (LNYSINFGRCVYCGLCADVCPELAIVHGGD). Positions 82, 85, 88, 92, 121, 124, 127, and 131 each coordinate [4Fe-4S] cluster.

The protein belongs to the complex I 23 kDa subunit family. As to quaternary structure, NDH-1 is composed of 14 different subunits. Subunits NuoA, H, J, K, L, M, N constitute the membrane sector of the complex. The cofactor is [4Fe-4S] cluster.

The protein localises to the cell inner membrane. It carries out the reaction a quinone + NADH + 5 H(+)(in) = a quinol + NAD(+) + 4 H(+)(out). Functionally, NDH-1 shuttles electrons from NADH, via FMN and iron-sulfur (Fe-S) centers, to quinones in the respiratory chain. The immediate electron acceptor for the enzyme in this species is believed to be ubiquinone. Couples the redox reaction to proton translocation (for every two electrons transferred, four hydrogen ions are translocated across the cytoplasmic membrane), and thus conserves the redox energy in a proton gradient. The protein is NADH-quinone oxidoreductase subunit I of Campylobacter hominis (strain ATCC BAA-381 / DSM 21671 / CCUG 45161 / LMG 19568 / NCTC 13146 / CH001A).